The chain runs to 573 residues: MADQVKERTLEETSTWAVAVVCFVLLFISIVLEHSIHKIGTWFKKKHKQALFEALEKVKAELMLLGFISLLLTIGQTPISNICISQKVASTMHPCSAAEEAKKYGKKDAGKKDDGDGDKPGRRLLLELAESYIHRRSLATKGYDKCAEKGKVAFVSAYGIHQLHIFIFVLAVVHVVYCIVTYAFGKIKMRTWKSWEEETKTIEYQYSNDPERFRFARDTSFGRRHLNFWSKTRVTLWIVCFFRQFFGSVTKVDYLALRHGFIMAHFAPGNESRFDFRKYIQRSLEKDFKTVVEISPVIWFVAVLFLLTNSYGLRSYLWLPFIPLVVILIVGTKLEVIITKLGLRIQEKGDVVRGAPVVQPGDDLFWFGKPRFILFLIHLVLFTNAFQLAFFAWSTYEFNLNNCFHESTADVVIRLVVGAVVQILCSYVTLPLYALVTQMGSKMKPTVFNDRVATALKKWHHTAKNETKHGRHSGSNTPFSSRPTTPTHGSSPIHLLHNFNNRSVENYPSSPSPRYSGHGHHEHQFWDPESQHQEAETSTHHSLAHESSEPVLASVELPPIRTSKSLRDFSFKK.

At 1-15 the chain is on the extracellular side; sequence MADQVKERTLEETST. Residues 16 to 36 traverse the membrane as a helical segment; it reads WAVAVVCFVLLFISIVLEHSI. The Cytoplasmic portion of the chain corresponds to 37-61; that stretch reads HKIGTWFKKKHKQALFEALEKVKAE. The helical transmembrane segment at 62 to 82 threads the bilayer; the sequence is LMLLGFISLLLTIGQTPISNI. At 83–164 the chain is on the extracellular side; the sequence is CISQKVASTM…VSAYGIHQLH (82 aa). The helical transmembrane segment at 165–185 threads the bilayer; sequence IFIFVLAVVHVVYCIVTYAFG. The Cytoplasmic segment spans residues 186 to 287; sequence KIKMRTWKSW…KYIQRSLEKD (102 aa). A helical transmembrane segment spans residues 288-308; the sequence is FKTVVEISPVIWFVAVLFLLT. The Extracellular portion of the chain corresponds to 309-317; sequence NSYGLRSYL. The helical transmembrane segment at 318-338 threads the bilayer; it reads WLPFIPLVVILIVGTKLEVII. Residues 339–371 lie on the Cytoplasmic side of the membrane; the sequence is TKLGLRIQEKGDVVRGAPVVQPGDDLFWFGKPR. Residues 372–392 traverse the membrane as a helical segment; that stretch reads FILFLIHLVLFTNAFQLAFFA. The Extracellular segment spans residues 393-415; that stretch reads WSTYEFNLNNCFHESTADVVIRL. The chain crosses the membrane as a helical span at residues 416 to 436; sequence VVGAVVQILCSYVTLPLYALV. Residues 437-573 lie on the Cytoplasmic side of the membrane; sequence TQMGSKMKPT…KSLRDFSFKK (137 aa). Positions 450–471 are calmodulin-binding; sequence DRVATALKKWHHTAKNETKHGR. A disordered region spans residues 462–573; that stretch reads TAKNETKHGR…KSLRDFSFKK (112 aa). Composition is skewed to polar residues over residues 473–490 and 498–513; these read SGSNTPFSSRPTTPTHGS and NFNNRSVENYPSSPSP. A Phosphoserine modification is found at Ser512. A compositionally biased stretch (basic and acidic residues) spans 522 to 548; sequence EHQFWDPESQHQEAETSTHHSLAHESS.

It belongs to the MLO family.

The protein resides in the membrane. May be involved in modulation of pathogen defense and leaf cell death. Activity seems to be regulated by Ca(2+)-dependent calmodulin binding and seems not to require heterotrimeric G proteins. This Arabidopsis thaliana (Mouse-ear cress) protein is MLO-like protein 2 (MLO2).